The following is a 208-amino-acid chain: Ribosome maturation factor RimP (208 aa).

The segment at 175–208 is disordered; sequence GEDVEDLVADPGADDELDELDELDELDDGDEDEQ. Acidic residues predominate over residues 177–208; that stretch reads DVEDLVADPGADDELDELDELDELDDGDEDEQ.

This sequence belongs to the RimP family.

Its subcellular location is the cytoplasm. Its function is as follows. Required for maturation of 30S ribosomal subunits. The chain is Ribosome maturation factor RimP from Kineococcus radiotolerans (strain ATCC BAA-149 / DSM 14245 / SRS30216).